We begin with the raw amino-acid sequence, 1202 residues long: DNA polymerase beta (1202 aa).

3 tandem repeats follow at residues 1071–1074 (AGNP), 1075–1078 (AGNP), and 1079–1082 (AGNA). The segment at 1071–1082 (AGNPAGNPAGNA) is 3 X 4 AA tandem repeats of A-G-[NK]-[PA].

It belongs to the DNA polymerase type-B family.

The enzyme catalyses DNA(n) + a 2'-deoxyribonucleoside 5'-triphosphate = DNA(n+1) + diphosphate. In terms of biological role, DNA-directed DNA polymerase involved in viral DNA replication. This chain is DNA polymerase beta (DPOL), found in Ornithodoros (relapsing fever ticks).